A 569-amino-acid polypeptide reads, in one-letter code: Sulfite reductase [NADPH] hemoprotein beta-component (569 aa).

Cys433, Cys439, Cys478, and Cys482 together coordinate [4Fe-4S] cluster. A siroheme-binding site is contributed by Cys482.

The protein belongs to the nitrite and sulfite reductase 4Fe-4S domain family. In terms of assembly, alpha(8)-beta(8). The alpha component is a flavoprotein, the beta component is a hemoprotein. It depends on siroheme as a cofactor. [4Fe-4S] cluster serves as cofactor.

The catalysed reaction is hydrogen sulfide + 3 NADP(+) + 3 H2O = sulfite + 3 NADPH + 4 H(+). It functions in the pathway sulfur metabolism; hydrogen sulfide biosynthesis; hydrogen sulfide from sulfite (NADPH route): step 1/1. Component of the sulfite reductase complex that catalyzes the 6-electron reduction of sulfite to sulfide. This is one of several activities required for the biosynthesis of L-cysteine from sulfate. The sequence is that of Sulfite reductase [NADPH] hemoprotein beta-component from Buchnera aphidicola subsp. Acyrthosiphon pisum (strain Tuc7).